A 191-amino-acid polypeptide reads, in one-letter code: Rubrerythrin (191 aa).

Residues 1 to 146 (MKSLKGSRTE…DFARNIKEGR (146 aa)) form the Ferritin-like diiron domain. Residues Glu20, Glu53, Glu94, Glu97, Glu128, His131, Cys158, Cys161, Cys174, and Cys177 each coordinate Fe(3+). The region spanning 153–191 (ATKWRCRNCGYVHEGTGAPELCPACAHPKAHFELLGINW) is the Rubredoxin-like domain.

As to quaternary structure, homodimer. Possesses two rubredoxin-like centers and two non-sulfur oxo-bridged di-iron centers per dimer. Fe(3+) is required as a cofactor.

It is found in the cytoplasm. May provide oxidative stress protection via catalytic reduction of intracellular hydrogen peroxide. This Nitratidesulfovibrio vulgaris (strain ATCC 29579 / DSM 644 / CCUG 34227 / NCIMB 8303 / VKM B-1760 / Hildenborough) (Desulfovibrio vulgaris) protein is Rubrerythrin (rbr).